The chain runs to 113 residues: Cell cycle protein GpsB (113 aa).

Residues 36–68 adopt a coiled-coil conformation; it reads LDMVIKDYSTFTQEIEALQAENIRLVQELDNAP.

Belongs to the GpsB family. Forms polymers through the coiled coil domains. Interacts with PBP1, MreC and EzrA.

It localises to the cytoplasm. Divisome component that associates with the complex late in its assembly, after the Z-ring is formed, and is dependent on DivIC and PBP2B for its recruitment to the divisome. Together with EzrA, is a key component of the system that regulates PBP1 localization during cell cycle progression. Its main role could be the removal of PBP1 from the cell pole after pole maturation is completed. Also contributes to the recruitment of PBP1 to the division complex. Not essential for septum formation. The protein is Cell cycle protein GpsB of Listeria monocytogenes serotype 4b (strain CLIP80459).